Reading from the N-terminus, the 121-residue chain is Small ribosomal subunit protein uS13 (121 aa).

A disordered region spans residues 91-121 (HRMSLPVRGQRTRTNARTRRGSRKTVAGRKK). Basic residues predominate over residues 100-121 (QRTRTNARTRRGSRKTVAGRKK).

Belongs to the universal ribosomal protein uS13 family. In terms of assembly, part of the 30S ribosomal subunit. Forms a loose heterodimer with protein S19. Forms two bridges to the 50S subunit in the 70S ribosome.

Located at the top of the head of the 30S subunit, it contacts several helices of the 16S rRNA. In the 70S ribosome it contacts the 23S rRNA (bridge B1a) and protein L5 of the 50S subunit (bridge B1b), connecting the 2 subunits; these bridges are implicated in subunit movement. Contacts the tRNAs in the A and P-sites. This is Small ribosomal subunit protein uS13 from Prochlorococcus marinus (strain MIT 9211).